The following is a 423-amino-acid chain: ATP-dependent Clp protease ATP-binding subunit ClpX (423 aa).

The ClpX-type ZB domain occupies 1–50; that stretch reads MTDDTEYRCSFCGKEHHQVDDLIAGPDVRICSECVVLSCEIVEDRRNEAL. C9, C12, C31, and C34 together coordinate Zn(2+). An ATP-binding site is contributed by 126-133; it reads PTGCGKTY.

This sequence belongs to the ClpX chaperone family. In terms of assembly, component of the ClpX-ClpP complex. Forms a hexameric ring that, in the presence of ATP, binds to fourteen ClpP subunits assembled into a disk-like structure with a central cavity, resembling the structure of eukaryotic proteasomes.

In terms of biological role, ATP-dependent specificity component of the Clp protease. It directs the protease to specific substrates. Can perform chaperone functions in the absence of ClpP. The polypeptide is ATP-dependent Clp protease ATP-binding subunit ClpX (Tropheryma whipplei (strain Twist) (Whipple's bacillus)).